Consider the following 239-residue polypeptide: UDP-2,3-diacylglucosamine hydrolase (239 aa).

Asp-8, His-10, Asp-41, Asn-79, and His-114 together coordinate Mn(2+). 79-80 (NR) contributes to the substrate binding site. Positions 122, 160, 164, 167, and 195 each coordinate substrate. Mn(2+) is bound by residues His-195 and His-197.

It belongs to the LpxH family. The cofactor is Mn(2+).

Its subcellular location is the cell inner membrane. It carries out the reaction UDP-2-N,3-O-bis[(3R)-3-hydroxytetradecanoyl]-alpha-D-glucosamine + H2O = 2-N,3-O-bis[(3R)-3-hydroxytetradecanoyl]-alpha-D-glucosaminyl 1-phosphate + UMP + 2 H(+). It functions in the pathway glycolipid biosynthesis; lipid IV(A) biosynthesis; lipid IV(A) from (3R)-3-hydroxytetradecanoyl-[acyl-carrier-protein] and UDP-N-acetyl-alpha-D-glucosamine: step 4/6. Functionally, hydrolyzes the pyrophosphate bond of UDP-2,3-diacylglucosamine to yield 2,3-diacylglucosamine 1-phosphate (lipid X) and UMP by catalyzing the attack of water at the alpha-P atom. Involved in the biosynthesis of lipid A, a phosphorylated glycolipid that anchors the lipopolysaccharide to the outer membrane of the cell. The polypeptide is UDP-2,3-diacylglucosamine hydrolase (Sodalis glossinidius (strain morsitans)).